A 162-amino-acid polypeptide reads, in one-letter code: Retinoic acid receptor responder protein 2 (162 aa).

A signal peptide spans 1–20; that stretch reads MWQLLLPLALGLGTMGLGRA. Intrachain disulfides connect cysteine 77–cysteine 87, cysteine 98–cysteine 117, and cysteine 101–cysteine 135. Positions 156–162 are excised as a propeptide; that stretch reads FIKALSP.

In terms of processing, secreted in an inactive precursor form, prochemerin, which is proteolytically processed by a variety of extracellular proteases to generate forms with differing levels of bioactivity. For example, the removal of five amino acids results in chemerin-157, which exhibits the highest activity, while removal of six amino acids results in chemerin-156 which has slightly less activity. Some proteases are able to cleave at more than one site and chemerin forms may be sequentially processed by different enzymes to modulate activity levels. The coordinated expression and activity of chemerin-modifying enzymes is essential for regulating its bioactivation, inactivation and, consequently, biological function. Cathepsin G cleaves six C-terminal amino acids from prochemerin (chemerin-156), elastase is able to cleave five (chemerin-157), seven (chemerin-155) or ten (chemerin-152), plasmin cleaves four amino acids (chemerin-158), and tryptase cleaves four (chemerin-158) or seven (chemerin-155). Multiple cleavages might be required to fully activate chemerin, with an initial tryptase cleavage resulting in chemerin with low activity (chemerin-158), and a second cleavage by carboxypeptidase N or B producing highly active chemerin (chemerin-157).

It localises to the secreted. In terms of biological role, adipocyte-secreted protein (adipokine) that regulates adipogenesis, metabolism and inflammation through activation of the chemokine-like receptor 1 (CMKLR1). Also acts as a ligand for CMKLR2. Can also bind to C-C chemokine receptor-like 2 (CCRL2), but with a lower affinity than it does to CMKLR1 or CMKLR2. Positively regulates adipocyte differentiation, modulates the expression of adipocyte genes involved in lipid and glucose metabolism and might play a role in angiogenesis, a process essential for the expansion of white adipose tissue. Also acts as a pro-inflammatory adipokine, causing an increase in secretion of pro-inflammatory and prodiabetic adipokines, which further impair adipose tissue metabolic function and have negative systemic effects including impaired insulin sensitivity, altered glucose and lipid metabolism, and a decrease in vascular function in other tissues. Can have both pro- and anti-inflammatory properties depending on the modality of enzymatic cleavage by different classes of proteases. Acts as a chemotactic factor for leukocyte populations expressing CMKLR1, particularly immature plasmacytoid dendritic cells, but also immature myeloid DCs, macrophages and natural killer cells. Exerts an anti-inflammatory role by preventing TNF/TNFA-induced VCAM1 expression and monocytes adhesion in vascular endothelial cells. The effect is mediated via inhibiting activation of NF-kappa-B and CRK/p38 through stimulation of AKT1/NOS3 signaling and nitric oxide production. Exhibits an antimicrobial function in the skin. The chain is Retinoic acid receptor responder protein 2 (RARRES2) from Bos taurus (Bovine).